Here is a 197-residue protein sequence, read N- to C-terminus: U1 small nuclear ribonucleoprotein C (197 aa).

The Matrin-type zinc-finger motif lies at 4 to 36 (YYCEYCDIYLTHSSPVGRRQHNQGRKHISAKIE). Residues 128-137 (FHNNKRINNI) are compositionally biased toward low complexity. A disordered region spans residues 128–178 (FHNNKRINNIPKPYNNYTNKPITNSSYKNDKQDYRNNNESNDNMNSNNFSN). Residues 142 to 154 (NNYTNKPITNSSY) show a composition bias toward polar residues. Residues 164–178 (NNESNDNMNSNNFSN) show a composition bias toward low complexity.

Belongs to the U1 small nuclear ribonucleoprotein C family. As to quaternary structure, U1 snRNP is composed of the 7 core Sm proteins B/B', D1, D2, D3, E, F and G that assemble in a heptameric protein ring on the Sm site of the small nuclear RNA to form the core snRNP, and at least 3 U1 snRNP-specific proteins U1-70K, U1-A and U1-C. U1-C interacts with U1 snRNA and the 5' splice-site region of the pre-mRNA.

Its subcellular location is the nucleus. Functionally, component of the spliceosomal U1 snRNP, which is essential for recognition of the pre-mRNA 5' splice-site and the subsequent assembly of the spliceosome. U1-C is directly involved in initial 5' splice-site recognition for both constitutive and regulated alternative splicing. The interaction with the 5' splice-site seems to precede base-pairing between the pre-mRNA and the U1 snRNA. Stimulates commitment or early (E) complex formation by stabilizing the base pairing of the 5' end of the U1 snRNA and the 5' splice-site region. This is U1 small nuclear ribonucleoprotein C (SNRPC) from Plasmodium berghei (strain Anka).